The primary structure comprises 398 residues: Fatty-acid-binding protein 2 (398 aa).

Positions 222, 235, and 302 each coordinate dodecanoate.

It belongs to the chalcone isomerase family. As to expression, expressed in developing cotyledons, young seedlings, roots, seeds, embryos, macrospores, preanthesis and tapetum. Restricted to developing and reproductive tissues.

The protein localises to the plastid. It localises to the chloroplast stroma. In terms of biological role, fatty-acid-binding protein. Associates with saturated fatty acid. In Arabidopsis thaliana (Mouse-ear cress), this protein is Fatty-acid-binding protein 2 (FAP2).